A 369-amino-acid chain; its full sequence is Tryptophan 2,3-dioxygenase 2 (369 aa).

Substrate contacts are provided by residues 36–40 (FIVVH) and R107. H303 serves as a coordination point for heme. Position 317 (T317) interacts with substrate.

This sequence belongs to the tryptophan 2,3-dioxygenase family. Homotetramer. The cofactor is heme.

The enzyme catalyses L-tryptophan + O2 = N-formyl-L-kynurenine. It functions in the pathway amino-acid degradation; L-tryptophan degradation via kynurenine pathway; L-kynurenine from L-tryptophan: step 1/2. Heme-dependent dioxygenase that catalyzes the oxidative cleavage of the L-tryptophan (L-Trp) pyrrole ring and converts L-tryptophan to N-formyl-L-kynurenine. Catalyzes the oxidative cleavage of the indole moiety. The sequence is that of Tryptophan 2,3-dioxygenase 2 from Ralstonia nicotianae (strain ATCC BAA-1114 / GMI1000) (Ralstonia solanacearum).